We begin with the raw amino-acid sequence, 309 residues long: Cytidine deaminase (309 aa).

CMP/dCMP-type deaminase domains are found at residues 48–168 (DEDA…FGPR) and 200–309 (DDND…SLSL). 89–91 (NME) is a substrate binding site. A Zn(2+)-binding site is contributed by histidine 102. Glutamate 104 functions as the Proton donor in the catalytic mechanism. Cysteine 129 and cysteine 132 together coordinate Zn(2+).

It belongs to the cytidine and deoxycytidylate deaminase family. In terms of assembly, homodimer. The cofactor is Zn(2+).

It catalyses the reaction cytidine + H2O + H(+) = uridine + NH4(+). The enzyme catalyses 2'-deoxycytidine + H2O + H(+) = 2'-deoxyuridine + NH4(+). In terms of biological role, this enzyme scavenges exogenous and endogenous cytidine and 2'-deoxycytidine for UMP synthesis. The polypeptide is Cytidine deaminase (Sodalis glossinidius (strain morsitans)).